The chain runs to 494 residues: Aspartyl/glutamyl-tRNA(Asn/Gln) amidotransferase subunit B (494 aa).

Belongs to the GatB/GatE family. GatB subfamily. Heterotrimer of A, B and C subunits.

It catalyses the reaction L-glutamyl-tRNA(Gln) + L-glutamine + ATP + H2O = L-glutaminyl-tRNA(Gln) + L-glutamate + ADP + phosphate + H(+). The enzyme catalyses L-aspartyl-tRNA(Asn) + L-glutamine + ATP + H2O = L-asparaginyl-tRNA(Asn) + L-glutamate + ADP + phosphate + 2 H(+). In terms of biological role, allows the formation of correctly charged Asn-tRNA(Asn) or Gln-tRNA(Gln) through the transamidation of misacylated Asp-tRNA(Asn) or Glu-tRNA(Gln) in organisms which lack either or both of asparaginyl-tRNA or glutaminyl-tRNA synthetases. The reaction takes place in the presence of glutamine and ATP through an activated phospho-Asp-tRNA(Asn) or phospho-Glu-tRNA(Gln). The polypeptide is Aspartyl/glutamyl-tRNA(Asn/Gln) amidotransferase subunit B (Synechococcus sp. (strain WH7803)).